The sequence spans 781 residues: Molybdenum cofactor sulfurase (781 aa).

An N6-(pyridoxal phosphate)lysine modification is found at K246. C413 is a catalytic residue. One can recognise an MOSC domain in the interval 635–781; sequence LRLLRQSGQR…MTCGDVVLVE (147 aa). S734 is subject to Phosphoserine.

It belongs to the class-V pyridoxal-phosphate-dependent aminotransferase family. MOCOS subfamily. The cofactor is pyridoxal 5'-phosphate.

The enzyme catalyses Mo-molybdopterin + L-cysteine + AH2 = thio-Mo-molybdopterin + L-alanine + A + H2O. It participates in cofactor biosynthesis; molybdopterin biosynthesis. In terms of biological role, sulfurates the molybdenum cofactor. Sulfation of molybdenum is essential for xanthine dehydrogenase (XDH) and aldehyde oxidase (ADO) enzymes in which molybdenum cofactor is liganded by 1 oxygen and 1 sulfur atom in active form. This Drosophila melanogaster (Fruit fly) protein is Molybdenum cofactor sulfurase.